Here is a 244-residue protein sequence, read N- to C-terminus: 15,16-dihydrobiliverdin:ferredoxin oxidoreductase (244 aa).

It belongs to the HY2 family.

It catalyses the reaction 15,16-dihydrobiliverdin + oxidized 2[4Fe-4S]-[ferredoxin] = biliverdin IXalpha + reduced 2[4Fe-4S]-[ferredoxin] + 2 H(+). In terms of biological role, catalyzes the two-electron reduction of biliverdin IX-alpha at the C15 methine bridge. The protein is 15,16-dihydrobiliverdin:ferredoxin oxidoreductase (pebA) of Gloeobacter violaceus (strain ATCC 29082 / PCC 7421).